The following is a 677-amino-acid chain: High-affinity choline transport protein (677 aa).

12 consecutive transmembrane segments (helical) span residues 15–35 (PVVF…TILF), 54–74 (FGWY…CIAC), 94–114 (LSWA…FFSV), 144–164 (FHYG…LGYF), 196–216 (IAAV…GVVQ), 233–253 (AKAA…TSGV), 265–285 (VALA…SFLL), 319–339 (WTLF…LFLA), 350–370 (FVLG…SVFG), 412–432 (VATI…ALVL), 452–472 (VFWS…NGIS), and 477–497 (TTVI…AGLY).

The protein belongs to the BCCT transporter (TC 2.A.15) family.

It localises to the cell inner membrane. It carries out the reaction choline(in) + H(+)(in) = choline(out) + H(+)(out). It functions in the pathway amine and polyamine biosynthesis; betaine biosynthesis via choline pathway. In terms of biological role, high-affinity uptake of choline driven by a proton-motive force. This is High-affinity choline transport protein (betT) from Escherichia coli O157:H7.